The primary structure comprises 354 residues: Probable mannitol dehydrogenase 1 (354 aa).

Residues Cys-43, His-65, Cys-96, Cys-99, Cys-102, Cys-110, and Cys-158 each contribute to the Zn(2+) site.

This sequence belongs to the zinc-containing alcohol dehydrogenase family. It depends on Zn(2+) as a cofactor.

It catalyses the reaction D-mannitol + NAD(+) = D-mannose + NADH + H(+). Oxidizes mannitol to mannose. Provides the initial step by which translocated mannitol is committed to central metabolism and, by regulating mannitol pool size, is important in regulating salt tolerance at the cellular level. In Stylosanthes humilis (Townsville stylo), this protein is Probable mannitol dehydrogenase 1 (CAD1).